Consider the following 82-residue polypeptide: Penaeidin-3g (82 aa).

Residues 1 to 19 form the signal peptide; that stretch reads MRLVVCLVFLASFALVCQG. Gln20 is subject to Pyrrolidone carboxylic acid. Cystine bridges form between Cys51–Cys66, Cys55–Cys73, and Cys67–Cys74. A Serine amide modification is found at Ser81.

Belongs to the penaeidin family.

It is found in the cytoplasmic granule. In terms of biological role, antibacterial and antifungal activity. Presents chitin-binding activity. The polypeptide is Penaeidin-3g (Penaeus vannamei (Whiteleg shrimp)).